Here is a 332-residue protein sequence, read N- to C-terminus: Ribosomal RNA small subunit methyltransferase H (332 aa).

Residues 36 to 38 (GGH), Asp-61, Phe-88, Asp-114, and Gln-121 each bind S-adenosyl-L-methionine.

It belongs to the methyltransferase superfamily. RsmH family.

The protein localises to the cytoplasm. The enzyme catalyses cytidine(1402) in 16S rRNA + S-adenosyl-L-methionine = N(4)-methylcytidine(1402) in 16S rRNA + S-adenosyl-L-homocysteine + H(+). Its function is as follows. Specifically methylates the N4 position of cytidine in position 1402 (C1402) of 16S rRNA. The polypeptide is Ribosomal RNA small subunit methyltransferase H (Pelodictyon phaeoclathratiforme (strain DSM 5477 / BU-1)).